Here is a 1148-residue protein sequence, read N- to C-terminus: Envelopment polyprotein (1148 aa).

The N-terminal stretch at 1-23 is a signal peptide; sequence MGELSPVCLYLLLQGLLLCNTGA. Residues 24–495 are Lumenal-facing; it reads ARNLNELKME…VPGLHGWATM (472 aa). 6 disulfide bridges follow: cysteine 34–cysteine 159, cysteine 68–cysteine 165, cysteine 117–cysteine 136, cysteine 141–cysteine 146, cysteine 183–cysteine 193, and cysteine 218–cysteine 257. The N-linked (GlcNAc...) asparagine; by host glycan is linked to asparagine 142. N-linked (GlcNAc...) asparagine; by host glycosylation is present at asparagine 357. 4 disulfide bridges follow: cysteine 386–cysteine 445, cysteine 390–cysteine 399, cysteine 415–cysteine 434, and cysteine 462–cysteine 485. Asparagine 409 carries N-linked (GlcNAc...) asparagine; by host glycosylation. A helical membrane pass occupies residues 496-516; that stretch reads LLLLTFCFGWVLIPTITMILL. Residues 517–637 are Cytoplasmic-facing; that stretch reads KILIAFAYLC…LSLFRYRSRF (121 aa). The binding to the ribonucleoprotein stretch occupies residues 526 to 543; the sequence is CSKYNTDSKFRILIEKVK. 2 consecutive CCHC-type zinc fingers follow at residues 555–575 and 580–601; these read CEVC…RKSC and CPYC…FKVC. Binding to the ribonucleoprotein stretches follow at residues 598–615, 602–613, and 621–635; these read FKVC…RKSL, KLRSRFQENLRK, and MQGC…RYRS. Residues 621-644 form the ITAM domain; the sequence is MQGCYRTLSLFRYRSRFFVGLVWC. The short motif at 625–628 is the YxxL element; that stretch reads YRTL. The chain crosses the membrane as a helical span at residues 638-658; the sequence is FVGLVWCVLLVHHLIVWAASA. Residues 659–1114 are Lumenal-facing; sequence ETQNLNAGWT…EWILGVLNGN (456 aa). 8 disulfide bridges follow: cysteine 745–cysteine 780, cysteine 749–cysteine 787, cysteine 761–cysteine 894, cysteine 775–cysteine 905, cysteine 790–cysteine 913, cysteine 816–cysteine 825, cysteine 833–cysteine 842, and cysteine 873–cysteine 877. The fusion loop stretch occupies residues 767 to 787; sequence YEYETGWGCNPPDCPGVGTGC. Asparagine 937 is a glycosylation site (N-linked (GlcNAc...) asparagine; by host). Intrachain disulfides connect cysteine 979–cysteine 1009, cysteine 1002–cysteine 1054, cysteine 1019–cysteine 1024, cysteine 1055–cysteine 1060, and cysteine 1094–cysteine 1098. Residues 1115 to 1135 traverse the membrane as a helical segment; the sequence is WMVVAVLVVLLILSILLFTLC. Binding to the ribonucleoprotein regions lie at residues 1131-1143 and 1131-1148; these read LFTL…PSYR and LFTL…EHKP. At 1136 to 1148 the chain is on the cytoplasmic side; it reads CPRRPSYRKEHKP.

The protein belongs to the hantavirus envelope glycoprotein family. Homodimer. Homotetramer; forms heterotetrameric Gn-Gc spikes in the pre-fusion conformation. Interacts (via C-terminus) with the nucleoprotein. Interacts with host TUFM; this interaction contributes to the virus-induced degradation of mitochondria by autophagy, which leads to degradation of host MAVS and inhibition of type I interferon (IFN) responses. Interacts with host MAP1LC3B; this interaction contributes to the virus-induced degradation of mitochondria by autophagy, which leads to degradation of host MAVS and inhibition of type I interferon (IFN) responses. As to quaternary structure, homodimer. Homotetramer; forms heterotetrameric Gn-Gc spikes in the pre-fusion conformation. Homotrimer; forms homotrimer in the post-fusion conformation at acidic pH. Interacts (via C-terminus) with the nucleoprotein. Envelope polyprotein precursor is quickly cleaved in vivo just after synthesis, presumably by host signal peptidase.

The protein localises to the virion membrane. It is found in the host cell surface. It localises to the host Golgi apparatus membrane. The protein resides in the host endoplasmic reticulum membrane. Its subcellular location is the host mitochondrion. Its function is as follows. Forms homotetramers with glycoprotein C at the surface of the virion. Attaches the virion to host cell receptors including integrin ITGAV/ITGB3. This attachment induces virion internalization predominantly through clathrin-dependent endocytosis. Mediates the assembly and budding of infectious virus particles through its interaction with the nucleocapsid protein and the viral genome. May dysregulate normal immune and endothelial cell responses through an ITAM motif. Translocates to mitochondria, binds to host TUFM and recruits MAP1LC3B. These interactions induce mitochondrial autophagy and therefore destruction of host MAVS leading to inhibition of type I interferon (IFN) responses. Concomitant breakdown of glycoprotein N is apparently prevented by the nucleoprotein that may inhibit Gn-stimulated autophagosome-lysosome fusion. Interacts with the viral genomic RNA. Forms homotetramers with glycoprotein N at the surface of the virion. Attaches the virion to host cell receptors including integrin ITGAV/ITGB3. This attachment induces virion internalization predominantly through clathrin-dependent endocytosis. Class II fusion protein that promotes fusion of viral membrane with host endosomal membrane after endocytosis of the virion. The sequence is that of Envelopment polyprotein (GP) from Homo sapiens (Human).